Here is a 137-residue protein sequence, read N- to C-terminus: MLVPKRVKHRREFRGKMRGEAKGGKEVAFGEYGLQATTSHWITNRQIEAARIAMTRYMKRGGKVWIKIFPHKSYTAKAIGVRMGSGKGAPEGWVAPVKRGKVMFEIAGVSEEIAREALRLASHKLPVKCKFVKREAE.

This sequence belongs to the universal ribosomal protein uL16 family. In terms of assembly, part of the 50S ribosomal subunit.

Functionally, binds 23S rRNA and is also seen to make contacts with the A and possibly P site tRNAs. The sequence is that of Large ribosomal subunit protein uL16 from Streptococcus pneumoniae serotype 2 (strain D39 / NCTC 7466).